The sequence spans 350 residues: 5'-tyrosyl-DNA phosphodiesterase (350 aa).

Residues 113 to 117 form an interaction with 5' end of substrate DNA region; that stretch reads NIDGL. 2 residues coordinate Mg(2+): Asp115 and Glu145. The segment at 219–224 is interaction with 5' end of substrate DNA; that stretch reads HLESMR. Asp258 functions as the Proton donor/acceptor in the catalytic mechanism. Residues 260-262 form an interaction with 5' end of substrate DNA region; the sequence is NLR.

Belongs to the CCR4/nocturin family. TTRAP/TDP2 subfamily. Requires Mg(2+) as cofactor. Mn(2+) is required as a cofactor.

Its subcellular location is the nucleus. The protein resides in the PML body. Its function is as follows. DNA repair enzyme that can remove a variety of covalent adducts from DNA through hydrolysis of a 5'-phosphodiester bond, giving rise to DNA with a free 5' phosphate. Catalyzes the hydrolysis of dead-end complexes between DNA and the topoisomerase 2 (top2) active site tyrosine residue. Hydrolyzes 5'-phosphoglycolates on protruding 5' ends on DNA double-strand breaks (DSBs) due to DNA damage by radiation and free radicals. The chain is 5'-tyrosyl-DNA phosphodiesterase from Caenorhabditis briggsae.